Consider the following 333-residue polypeptide: tRNA-dihydrouridine(16) synthase (333 aa).

FMN contacts are provided by residues 19–21 (PMQ) and Gln80. Cys110 (proton donor) is an active-site residue. FMN-binding positions include Lys151, 211–213 (NGD), and 235–236 (GR).

This sequence belongs to the Dus family. DusC subfamily. FMN is required as a cofactor.

It carries out the reaction 5,6-dihydrouridine(16) in tRNA + NADP(+) = uridine(16) in tRNA + NADPH + H(+). The catalysed reaction is 5,6-dihydrouridine(16) in tRNA + NAD(+) = uridine(16) in tRNA + NADH + H(+). Functionally, catalyzes the synthesis of 5,6-dihydrouridine (D), a modified base found in the D-loop of most tRNAs, via the reduction of the C5-C6 double bond in target uridines. Specifically modifies U16 in tRNAs. This chain is tRNA-dihydrouridine(16) synthase, found in Neisseria meningitidis serogroup A / serotype 4A (strain DSM 15465 / Z2491).